A 155-amino-acid polypeptide reads, in one-letter code: Small ribosomal subunit protein uS7c (155 aa).

The protein belongs to the universal ribosomal protein uS7 family. Part of the 30S ribosomal subunit.

It is found in the plastid. Its subcellular location is the chloroplast. In terms of biological role, one of the primary rRNA binding proteins, it binds directly to 16S rRNA where it nucleates assembly of the head domain of the 30S subunit. The sequence is that of Small ribosomal subunit protein uS7c (rps7) from Pinus thunbergii (Japanese black pine).